The chain runs to 338 residues: Malate dehydrogenase, mitochondrial (338 aa).

Residues 1 to 24 (MLSALARPAGAALRRSFSTSAQNN) constitute a mitochondrion transit peptide. NAD(+)-binding positions include 31 to 37 (GASGGIG) and D57. S33 carries an O-linked (GalNAc...) serine glycan. An N6-acetyllysine; alternate mark is found at K78 and K91. K78 and K91 each carry N6-succinyllysine; alternate. Positions 104 and 110 each coordinate substrate. NAD(+) contacts are provided by residues N117 and 140 to 142 (ISN). A substrate-binding site is contributed by N142. An N6-acetyllysine modification is found at K165. The Proton relay role is filled by D173. R176 lines the substrate pocket. K185 is modified (N6-acetyllysine; alternate). The residue at position 185 (K185) is an N6-succinyllysine; alternate. Catalysis depends on H200, which acts as the Proton acceptor. N6-succinyllysine is present on K203. N6-acetyllysine; alternate occurs at positions 215 and 239. Residues K215 and K239 each carry the N6-succinyllysine; alternate modification. The residue at position 239 (K239) is an N6-malonyllysine; alternate. S246 carries the phosphoserine modification. Residue M251 participates in NAD(+) binding. K269 bears the N6-succinyllysine mark. 5 positions are modified to N6-acetyllysine; alternate: K296, K301, K307, K314, and K324. K296, K301, K307, K314, and K324 each carry N6-succinyllysine; alternate. Residue K307 is modified to N6-malonyllysine; alternate. At S326 the chain carries Phosphoserine. Residues K328, K329, and K335 each carry the N6-acetyllysine; alternate modification. N6-succinyllysine; alternate is present on K328. At K329 the chain carries N6-malonyllysine; alternate. K335 carries the post-translational modification N6-succinyllysine; alternate.

Belongs to the LDH/MDH superfamily. MDH type 1 family. In terms of assembly, homodimer. Acetylation is enhanced after treatment either with trichostin A (TSA) or with nicotinamide (NAM) with the appearance of tri- and tetraacetylations. Glucose also increases acetylation. In terms of tissue distribution, ubiquitously expressed. Highly expressed in skeletal muscle and heart. Also expressed in liver, ileum, colon, kidney and adipose tissue, and at very low levels in lung, pancreas, stomach and spleen.

It localises to the mitochondrion matrix. It carries out the reaction (S)-malate + NAD(+) = oxaloacetate + NADH + H(+). Its activity is regulated as follows. Enzyme activity is enhanced by acetylation. The protein is Malate dehydrogenase, mitochondrial of Felis catus (Cat).